The chain runs to 102 residues: Citrate lyase acyl carrier protein (102 aa).

An O-(phosphoribosyl dephospho-coenzyme A)serine modification is found at S14.

Belongs to the CitD family. As to quaternary structure, oligomer with a subunit composition of (alpha,beta,gamma)6.

Its subcellular location is the cytoplasm. Covalent carrier of the coenzyme of citrate lyase. The chain is Citrate lyase acyl carrier protein from Streptococcus pyogenes serotype M4 (strain MGAS10750).